The sequence spans 348 residues: D-alanine--D-alanine ligase (348 aa).

An ATP-grasp domain is found at 136–344 (KSVFKSYNLP…LEKLVASLIE (209 aa)). Position 171–226 (171–226 (NKIINYPCFIKPANLGSSVGITKAYSKEEFITGIEFAAKYDERIIVEKSIEGRELE)) interacts with ATP. Mg(2+) is bound by residues aspartate 297, glutamate 311, and asparagine 313.

Belongs to the D-alanine--D-alanine ligase family. Mg(2+) serves as cofactor. The cofactor is Mn(2+).

It is found in the cytoplasm. The catalysed reaction is 2 D-alanine + ATP = D-alanyl-D-alanine + ADP + phosphate + H(+). It participates in cell wall biogenesis; peptidoglycan biosynthesis. Its function is as follows. Cell wall formation. This is D-alanine--D-alanine ligase from Prochlorococcus marinus (strain NATL1A).